The chain runs to 757 residues: Elongation factor G, mitochondrial (757 aa).

One can recognise a tr-type G domain in the interval 66 to 344 (DRMRNIGISA…VLDYLPCPME (279 aa)). Residues 75–82 (AHIDSGKT), 142–146 (DTPGH), and 196–199 (NKLD) contribute to the GTP site.

Belongs to the TRAFAC class translation factor GTPase superfamily. Classic translation factor GTPase family. EF-G/EF-2 subfamily.

Its subcellular location is the mitochondrion. Its pathway is protein biosynthesis; polypeptide chain elongation. Functionally, mitochondrial GTPase that catalyzes the GTP-dependent ribosomal translocation step during translation elongation. During this step, the ribosome changes from the pre-translocational (PRE) to the post-translocational (POST) state as the newly formed A-site-bound peptidyl-tRNA and P-site-bound deacylated tRNA move to the P and E sites, respectively. Catalyzes the coordinated movement of the two tRNA molecules, the mRNA and conformational changes in the ribosome. This is Elongation factor G, mitochondrial from Oryza sativa subsp. japonica (Rice).